Here is a 666-residue protein sequence, read N- to C-terminus: MSDSHLTAFDKASKAGFIIALGIVYGDIGTSPLYTMQSLVENQGGVNQVSESFILGSISLIIWTLTLITTIKYVLIALKADNHHEGGIFSLFTLVRKISPWLIIPAMIGGATLLSDGALTPAVTVTSAIEGLKAVPGLSHIYQNQTNVIITTLVILIVLFGIQRFGTGFIGKIFGPVMFIWFSFLGVSGFFNTLGHLEIFKAINPYYALHLLFSPENHRGIFILGSIFLATTGAEALYSDLGHVGRGNIYVSWPFVKMCIVLSYCGQAAWILANKHSGIELNPFFASVPSQLRVYLVSLATLAAIIASQALISGSFTLISEAMRLKIFPLFRVTYPGANLGQLYIPVINWILFAVTSCTVLAFRTSAHMEAAYGLAITITMLMTTILLKYYLIKKGTRPILAHLAMAFFALVEFIFFLASAIKFMHGGYAVVILALAIVFVMFIWHAGTRIVFKYVKSLNLNDYKEQIKQLRDDVCFDLYQTNVVYLSNRMQDHMIDRSILYSILDKRPKRAQVYWFVNVQVTDEPYTAKYKVDMMGTDYMVRVNLYLGFRMPQTVPRYLRTIVQDLMESGRLPKQEQEYTITPGRDVGDFRFVLIEERVTNARQLSNFERFIMQTKASIKHVTASPMRWFGLQYSEVTLEVVPLILSDVLKLPIKELVPVEDSEA.

Transmembrane regions (helical) follow at residues 16 to 36, 58 to 78, 98 to 118, 141 to 161, 165 to 185, 221 to 241, 253 to 273, 299 to 319, 343 to 363, 373 to 393, 399 to 419, and 424 to 444; these read GFII…LYTM, ISLI…LIAL, ISPW…SDGA, IYQN…VLFG, FGTG…FSFL, IFIL…YSDL, WPFV…WILA, LATL…FTLI, LYIP…VLAF, YGLA…YYLI, PILA…FFLA, and FMHG…VMFI.

It belongs to the HAK/KUP transporter (TC 2.A.72) family.

It is found in the cell membrane. It carries out the reaction K(+)(in) + H(+)(in) = K(+)(out) + H(+)(out). Transport of potassium into the cell. Likely operates as a K(+):H(+) symporter. The protein is Probable potassium transport system protein Kup of Streptococcus pyogenes serotype M28 (strain MGAS6180).